The primary structure comprises 262 residues: 1-(5-phosphoribosyl)-5-[(5-phosphoribosylamino)methylideneamino] imidazole-4-carboxamide isomerase (262 aa).

Catalysis depends on Asp8, which acts as the Proton acceptor. The Proton donor role is filled by Asp129. Residues 243–262 are disordered; the sequence is KDNVGQEDHSLPRCEPGPRG.

The protein belongs to the HisA/HisF family.

It is found in the cytoplasm. It carries out the reaction 1-(5-phospho-beta-D-ribosyl)-5-[(5-phospho-beta-D-ribosylamino)methylideneamino]imidazole-4-carboxamide = 5-[(5-phospho-1-deoxy-D-ribulos-1-ylimino)methylamino]-1-(5-phospho-beta-D-ribosyl)imidazole-4-carboxamide. The protein operates within amino-acid biosynthesis; L-histidine biosynthesis; L-histidine from 5-phospho-alpha-D-ribose 1-diphosphate: step 4/9. This Desulforudis audaxviator (strain MP104C) protein is 1-(5-phosphoribosyl)-5-[(5-phosphoribosylamino)methylideneamino] imidazole-4-carboxamide isomerase.